We begin with the raw amino-acid sequence, 393 residues long: Calreticulin (393 aa).

The N-terminal stretch at M1–G16 is a signal peptide. N-linked (GlcNAc...) asparagine glycosylation is present at N27. A disulfide bridge links C103 with C135. Residues Y107, K109, Y126, and D133 each coordinate an alpha-D-glucoside. 7 consecutive repeat copies span residues V189 to M200, D208 to D219, D225 to Q236, D242 to D253, G257 to P267, G271 to P281, and G285 to P295. Residues V189–D253 form a 4 X 12 AA approximate repeats region. The disordered stretch occupies residues L194 to R277. Basic and acidic residues predominate over residues P202–D216. The span at W217–P226 shows a compositional bias: acidic residues. Basic and acidic residues-rich tracts occupy residues D227 to D249 and E258 to R277. A 3 X 11 AA approximate repeats region spans residues G257–P295. Residue D315 coordinates an alpha-D-glucoside. The interval A351–L393 is disordered. The Prevents secretion from ER motif lies at H390–L393.

This sequence belongs to the calreticulin family.

The protein resides in the endoplasmic reticulum lumen. Its function is as follows. Molecular calcium-binding chaperone promoting folding, oligomeric assembly and quality control in the ER via the calreticulin/calnexin cycle. This lectin may interact transiently with almost all of the monoglucosylated glycoproteins that are synthesized in the ER. The polypeptide is Calreticulin (Schistosoma mansoni (Blood fluke)).